The primary structure comprises 383 residues: Lipid-A-disaccharide synthase (383 aa).

It belongs to the LpxB family.

It carries out the reaction a lipid X + a UDP-2-N,3-O-bis[(3R)-3-hydroxyacyl]-alpha-D-glucosamine = a lipid A disaccharide + UDP + H(+). Its pathway is bacterial outer membrane biogenesis; LPS lipid A biosynthesis. Its function is as follows. Condensation of UDP-2,3-diacylglucosamine and 2,3-diacylglucosamine-1-phosphate to form lipid A disaccharide, a precursor of lipid A, a phosphorylated glycolipid that anchors the lipopolysaccharide to the outer membrane of the cell. In Alcanivorax borkumensis (strain ATCC 700651 / DSM 11573 / NCIMB 13689 / SK2), this protein is Lipid-A-disaccharide synthase.